A 131-amino-acid polypeptide reads, in one-letter code: Transcriptional activatory protein CaiF (131 aa).

Potential transcriptional activator of carnitine metabolism. This is Transcriptional activatory protein CaiF (caiF) from Escherichia coli (strain K12).